A 268-amino-acid chain; its full sequence is Undecaprenyl-diphosphatase (268 aa).

8 consecutive transmembrane segments (helical) span residues 3–23 (VFNL…EFIP), 46–66 (FEVL…SAKL), 84–104 (FGIL…HGFI), 107–127 (VLFE…FILL), 144–164 (YPLP…IPGV), 184–204 (AAEF…AYDL), 218–238 (LIGV…RYLL), and 248–268 (LFGW…LVWG).

This sequence belongs to the UppP family.

The protein resides in the cell inner membrane. It catalyses the reaction di-trans,octa-cis-undecaprenyl diphosphate + H2O = di-trans,octa-cis-undecaprenyl phosphate + phosphate + H(+). Catalyzes the dephosphorylation of undecaprenyl diphosphate (UPP). Confers resistance to bacitracin. This chain is Undecaprenyl-diphosphatase, found in Brucella anthropi (strain ATCC 49188 / DSM 6882 / CCUG 24695 / JCM 21032 / LMG 3331 / NBRC 15819 / NCTC 12168 / Alc 37) (Ochrobactrum anthropi).